Here is a 198-residue protein sequence, read N- to C-terminus: Segregation and condensation protein B (198 aa).

It belongs to the ScpB family. As to quaternary structure, homodimer. Homodimerization may be required to stabilize the binding of ScpA to the Smc head domains. Component of a cohesin-like complex composed of ScpA, ScpB and the Smc homodimer, in which ScpA and ScpB bind to the head domain of Smc. The presence of the three proteins is required for the association of the complex with DNA.

It is found in the cytoplasm. In terms of biological role, participates in chromosomal partition during cell division. May act via the formation of a condensin-like complex containing Smc and ScpA that pull DNA away from mid-cell into both cell halves. The protein is Segregation and condensation protein B of Streptococcus mutans serotype c (strain ATCC 700610 / UA159).